An 85-amino-acid chain; its full sequence is Putative septation protein SpoVG (85 aa).

This sequence belongs to the SpoVG family.

Its function is as follows. Could be involved in septation. The sequence is that of Putative septation protein SpoVG from Archaeoglobus fulgidus (strain ATCC 49558 / DSM 4304 / JCM 9628 / NBRC 100126 / VC-16).